The chain runs to 902 residues: Glycogen phosphorylase (902 aa).

The disordered stretch occupies residues 1 to 21; it reads MPPASTSTTNDMITEEPTSPH. Position 31 is a phosphothreonine (Thr-31). Ser-333 bears the Phosphoserine mark. Lys-751 is subject to N6-(pyridoxal phosphate)lysine.

This sequence belongs to the glycogen phosphorylase family. Homodimer. Pyridoxal 5'-phosphate is required as a cofactor.

Its subcellular location is the cytoplasm. It localises to the cytosol. It carries out the reaction [(1-&gt;4)-alpha-D-glucosyl](n) + phosphate = [(1-&gt;4)-alpha-D-glucosyl](n-1) + alpha-D-glucose 1-phosphate. Activated by phosphorylation of Thr-31. Its function is as follows. Phosphorylase is an important allosteric enzyme in carbohydrate metabolism. Enzymes from different sources differ in their regulatory mechanisms and in their natural substrates. However, all known phosphorylases share catalytic and structural properties. This is Glycogen phosphorylase (GPH1) from Saccharomyces cerevisiae (strain ATCC 204508 / S288c) (Baker's yeast).